Here is a 188-residue protein sequence, read N- to C-terminus: Josephin-2 (188 aa).

The region spanning 11–188 (PPSVYHERQR…EEAGCWLNTS (178 aa)) is the Josephin domain. Cysteine 24 acts as the Nucleophile in catalysis. The active-site Proton acceptor is the histidine 125.

It localises to the cytoplasm. It is found in the cytosol. The catalysed reaction is Thiol-dependent hydrolysis of ester, thioester, amide, peptide and isopeptide bonds formed by the C-terminal Gly of ubiquitin (a 76-residue protein attached to proteins as an intracellular targeting signal).. Cleaves 'Lys-63'-linked poly-ubiquitin chains, and with lesser efficiency 'Lys-48'-linked poly-ubiquitin chains (in vitro). May act as a deubiquitinating enzyme. The sequence is that of Josephin-2 (Josd2) from Mus musculus (Mouse).